We begin with the raw amino-acid sequence, 558 residues long: INCREASED PETAL GROWTH ANISOTROPY 1-like protein 2 (558 aa).

Residues 1 to 15 (MSRISTTSTTPSRVR) are compositionally biased toward low complexity. Positions 1 to 54 (MSRISTTSTTPSRVRAANSHYSVISKPRAQDDNGLTGGKPKSSGYDVKNDPAKR) are disordered. Positions 104–180 (VMATAAAEDE…EAKISSLSSN (77 aa)) form a coiled coil. Positions 207–285 (KVKKEVAVES…AARAQKSPPV (79 aa)) are disordered. Composition is skewed to pro residues over residues 221-236 (PPSP…PPLP) and 256-272 (FAPP…PPRP). Positions 392-448 (KADTLQEAAVEYRELKKLEKELSSYSDDPNIHYGVALKKMANLLDKSEQRIRRLVRL) form a coiled coil.

This sequence belongs to the IPGA1 family.

It localises to the cytoplasm. It is found in the cytoskeleton. Microtubule-associated protein probably involved in the regulation of microtubule organization. The sequence is that of INCREASED PETAL GROWTH ANISOTROPY 1-like protein 2 from Arabidopsis thaliana (Mouse-ear cress).